We begin with the raw amino-acid sequence, 141 residues long: Nucleoside triphosphatase NudI (141 aa).

Residues 1 to 141 (MRQRTIVCPL…RKTLRLKGLL (141 aa)) form the Nudix hydrolase domain. Residues 38 to 59 (GGVESGERIEEALRREIREELG) carry the Nudix box motif.

Belongs to the Nudix hydrolase family. NudI subfamily. As to quaternary structure, monomer. The cofactor is Mg(2+).

It catalyses the reaction a ribonucleoside 5'-triphosphate + H2O = a ribonucleoside 5'-phosphate + diphosphate + H(+). The catalysed reaction is a 2'-deoxyribonucleoside 5'-triphosphate + H2O = a 2'-deoxyribonucleoside 5'-phosphate + diphosphate + H(+). It carries out the reaction dUTP + H2O = dUMP + diphosphate + H(+). The enzyme catalyses dTTP + H2O = dTMP + diphosphate + H(+). It catalyses the reaction dCTP + H2O = dCMP + diphosphate + H(+). Catalyzes the hydrolysis of nucleoside triphosphates, with a preference for pyrimidine deoxynucleoside triphosphates (dUTP, dTTP and dCTP). The protein is Nucleoside triphosphatase NudI of Shigella flexneri serotype 5b (strain 8401).